A 177-amino-acid chain; its full sequence is Large ribosomal subunit protein uL6 (177 aa).

This sequence belongs to the universal ribosomal protein uL6 family. Part of the 50S ribosomal subunit.

Its function is as follows. This protein binds to the 23S rRNA, and is important in its secondary structure. It is located near the subunit interface in the base of the L7/L12 stalk, and near the tRNA binding site of the peptidyltransferase center. The polypeptide is Large ribosomal subunit protein uL6 (Sinorhizobium medicae (strain WSM419) (Ensifer medicae)).